Reading from the N-terminus, the 429-residue chain is Adenylosuccinate synthetase (429 aa).

GTP is bound by residues 12-18 (GDEGKGK) and 40-42 (GHT). The active-site Proton acceptor is Asp13. Residues Asp13 and Gly40 each coordinate Mg(2+). IMP is bound by residues 13–16 (DEGK), 38–41 (NAGH), Thr129, Arg143, Gln223, Thr238, and Arg302. His41 (proton donor) is an active-site residue. 298–304 (TVTGRRR) is a substrate binding site. GTP-binding positions include Arg304, 330-332 (KLD), and 412-414 (STS).

This sequence belongs to the adenylosuccinate synthetase family. Homodimer. Requires Mg(2+) as cofactor.

Its subcellular location is the cytoplasm. The catalysed reaction is IMP + L-aspartate + GTP = N(6)-(1,2-dicarboxyethyl)-AMP + GDP + phosphate + 2 H(+). The protein operates within purine metabolism; AMP biosynthesis via de novo pathway; AMP from IMP: step 1/2. Its function is as follows. Plays an important role in the de novo pathway of purine nucleotide biosynthesis. Catalyzes the first committed step in the biosynthesis of AMP from IMP. The chain is Adenylosuccinate synthetase from Zymomonas mobilis subsp. mobilis (strain ATCC 31821 / ZM4 / CP4).